A 257-amino-acid polypeptide reads, in one-letter code: Phosphate import ATP-binding protein PstB (257 aa).

Residues 11 to 252 enclose the ABC transporter domain; the sequence is IQVRDLNFYY…PAKKQTEDYI (242 aa). An ATP-binding site is contributed by 43-50; the sequence is GPSGCGKS.

It belongs to the ABC transporter superfamily. Phosphate importer (TC 3.A.1.7) family. In terms of assembly, the complex is composed of two ATP-binding proteins (PstB), two transmembrane proteins (PstC and PstA) and a solute-binding protein (PstS).

Its subcellular location is the cell inner membrane. It catalyses the reaction phosphate(out) + ATP + H2O = ADP + 2 phosphate(in) + H(+). Functionally, part of the ABC transporter complex PstSACB involved in phosphate import. Responsible for energy coupling to the transport system. The protein is Phosphate import ATP-binding protein PstB of Salmonella paratyphi A (strain ATCC 9150 / SARB42).